Here is a 391-residue protein sequence, read N- to C-terminus: Phosphoglycerate kinase (391 aa).

Residues 21–23 (DLN), R36, 59–62 (HLGR), R113, and R146 contribute to the substrate site. Residues K197, E319, and 345–348 (GGDT) each bind ATP.

The protein belongs to the phosphoglycerate kinase family. Monomer.

Its subcellular location is the cytoplasm. The catalysed reaction is (2R)-3-phosphoglycerate + ATP = (2R)-3-phospho-glyceroyl phosphate + ADP. It participates in carbohydrate degradation; glycolysis; pyruvate from D-glyceraldehyde 3-phosphate: step 2/5. In Shewanella woodyi (strain ATCC 51908 / MS32), this protein is Phosphoglycerate kinase.